Consider the following 242-residue polypeptide: Biosynthetic peptidoglycan transglycosylase (242 aa).

A helical membrane pass occupies residues 19–39 (LMVVLAVFWGGGIALFSVAPV).

This sequence belongs to the glycosyltransferase 51 family.

The protein resides in the cell inner membrane. It carries out the reaction [GlcNAc-(1-&gt;4)-Mur2Ac(oyl-L-Ala-gamma-D-Glu-L-Lys-D-Ala-D-Ala)](n)-di-trans,octa-cis-undecaprenyl diphosphate + beta-D-GlcNAc-(1-&gt;4)-Mur2Ac(oyl-L-Ala-gamma-D-Glu-L-Lys-D-Ala-D-Ala)-di-trans,octa-cis-undecaprenyl diphosphate = [GlcNAc-(1-&gt;4)-Mur2Ac(oyl-L-Ala-gamma-D-Glu-L-Lys-D-Ala-D-Ala)](n+1)-di-trans,octa-cis-undecaprenyl diphosphate + di-trans,octa-cis-undecaprenyl diphosphate + H(+). Its pathway is cell wall biogenesis; peptidoglycan biosynthesis. Its function is as follows. Peptidoglycan polymerase that catalyzes glycan chain elongation from lipid-linked precursors. In Escherichia coli (strain 55989 / EAEC), this protein is Biosynthetic peptidoglycan transglycosylase.